The primary structure comprises 404 residues: Cysteine desulfurase IscS (404 aa).

Pyridoxal 5'-phosphate-binding positions include 75-76 (AT), Asn155, Gln183, and 203-205 (SSH). Lys206 carries the N6-(pyridoxal phosphate)lysine modification. A pyridoxal 5'-phosphate-binding site is contributed by Thr243. Catalysis depends on Cys328, which acts as the Cysteine persulfide intermediate. Residue Cys328 coordinates [2Fe-2S] cluster.

Belongs to the class-V pyridoxal-phosphate-dependent aminotransferase family. NifS/IscS subfamily. As to quaternary structure, homodimer. Forms a heterotetramer with IscU, interacts with other sulfur acceptors. It depends on pyridoxal 5'-phosphate as a cofactor.

The protein resides in the cytoplasm. The catalysed reaction is (sulfur carrier)-H + L-cysteine = (sulfur carrier)-SH + L-alanine. It participates in cofactor biosynthesis; iron-sulfur cluster biosynthesis. In terms of biological role, master enzyme that delivers sulfur to a number of partners involved in Fe-S cluster assembly, tRNA modification or cofactor biosynthesis. Catalyzes the removal of elemental sulfur atoms from cysteine to produce alanine. Functions as a sulfur delivery protein for Fe-S cluster synthesis onto IscU, an Fe-S scaffold assembly protein, as well as other S acceptor proteins. This is Cysteine desulfurase IscS from Haemophilus influenzae (strain PittEE).